Reading from the N-terminus, the 252-residue chain is METTTKLAIGVSALCCLASAAFAGGPDIPMIDMNGFHIGLGFGYKSYTYDQVGTVTVTTNGGTVLSVLHPVSASITQFGPVGELGYTFASDWWIAGVKAQYQYDNVRSVHIMDAPLVGSNYSYRTRLGSHLTAMLLAGIKVNEANAVYLEAGYSTVWGKTTLFGPGPVAVSMKNRLNGGIAGIGWRHYFMNNVFLDLSYDYALYRSKSNSVTLSSATASAEGTAIGVSGTVQNPKRVAINGITATVNYLFNI.

The signal sequence occupies residues 1–23; the sequence is METTTKLAIGVSALCCLASAAFA.

The protein belongs to the Coxiella porin P1 (CPP1) (TC 1.B.43) family. May form trimers.

Its subcellular location is the cell outer membrane. In terms of biological role, able to form a pore in lipid bilayers. The polypeptide is Outer membrane protein P1 (ompP1) (Coxiella burnetii (strain RSA 493 / Nine Mile phase I)).